Consider the following 292-residue polypeptide: Homoserine kinase (292 aa).

Position 84 to 94 (84 to 94 (PLSRGLGSSSA)) interacts with ATP.

It belongs to the GHMP kinase family. Homoserine kinase subfamily.

The protein resides in the cytoplasm. The enzyme catalyses L-homoserine + ATP = O-phospho-L-homoserine + ADP + H(+). It participates in amino-acid biosynthesis; L-threonine biosynthesis; L-threonine from L-aspartate: step 4/5. In terms of biological role, catalyzes the ATP-dependent phosphorylation of L-homoserine to L-homoserine phosphate. This is Homoserine kinase from Campylobacter jejuni subsp. jejuni serotype O:2 (strain ATCC 700819 / NCTC 11168).